The primary structure comprises 217 residues: Phosphoribosylformylglycinamidine synthase subunit PurQ (217 aa).

Residues 2-217 (NIGIIVFPGS…GKSILSTLLS (216 aa)) enclose the Glutamine amidotransferase type-1 domain. The active-site Nucleophile is the cysteine 86. Residues histidine 194 and glutamate 196 contribute to the active site.

As to quaternary structure, part of the FGAM synthase complex composed of 1 PurL, 1 PurQ and 2 PurS subunits.

Its subcellular location is the cytoplasm. It catalyses the reaction N(2)-formyl-N(1)-(5-phospho-beta-D-ribosyl)glycinamide + L-glutamine + ATP + H2O = 2-formamido-N(1)-(5-O-phospho-beta-D-ribosyl)acetamidine + L-glutamate + ADP + phosphate + H(+). The catalysed reaction is L-glutamine + H2O = L-glutamate + NH4(+). It functions in the pathway purine metabolism; IMP biosynthesis via de novo pathway; 5-amino-1-(5-phospho-D-ribosyl)imidazole from N(2)-formyl-N(1)-(5-phospho-D-ribosyl)glycinamide: step 1/2. Part of the phosphoribosylformylglycinamidine synthase complex involved in the purines biosynthetic pathway. Catalyzes the ATP-dependent conversion of formylglycinamide ribonucleotide (FGAR) and glutamine to yield formylglycinamidine ribonucleotide (FGAM) and glutamate. The FGAM synthase complex is composed of three subunits. PurQ produces an ammonia molecule by converting glutamine to glutamate. PurL transfers the ammonia molecule to FGAR to form FGAM in an ATP-dependent manner. PurS interacts with PurQ and PurL and is thought to assist in the transfer of the ammonia molecule from PurQ to PurL. The chain is Phosphoribosylformylglycinamidine synthase subunit PurQ from Prochlorococcus marinus (strain NATL2A).